We begin with the raw amino-acid sequence, 113 residues long: ATP-dependent Clp protease adapter protein ClpS (113 aa).

The segment at Met-1–Thr-24 is disordered.

This sequence belongs to the ClpS family. Binds to the N-terminal domain of the chaperone ClpA.

Its function is as follows. Involved in the modulation of the specificity of the ClpAP-mediated ATP-dependent protein degradation. The polypeptide is ATP-dependent Clp protease adapter protein ClpS (Ruegeria pomeroyi (strain ATCC 700808 / DSM 15171 / DSS-3) (Silicibacter pomeroyi)).